A 278-amino-acid chain; its full sequence is Large ribosomal subunit protein uL24m (278 aa).

One can recognise a KOW domain in the interval 109–142 (FFPGDLVQVMVGKDKGRQGLVLTISRDSSEVVVD).

It belongs to the universal ribosomal protein uL24 family.

The protein localises to the mitochondrion. The chain is Large ribosomal subunit protein uL24m (mrpl-24) from Caenorhabditis briggsae.